The primary structure comprises 279 residues: Large ribosomal subunit protein uL2 (279 aa).

2 stretches are compositionally biased toward basic residues: residues G211–H221 and S256–K279. The interval G211–K279 is disordered.

This sequence belongs to the universal ribosomal protein uL2 family. As to quaternary structure, part of the 50S ribosomal subunit. Forms a bridge to the 30S subunit in the 70S ribosome.

One of the primary rRNA binding proteins. Required for association of the 30S and 50S subunits to form the 70S ribosome, for tRNA binding and peptide bond formation. It has been suggested to have peptidyltransferase activity; this is somewhat controversial. Makes several contacts with the 16S rRNA in the 70S ribosome. The polypeptide is Large ribosomal subunit protein uL2 (Oenococcus oeni (strain ATCC BAA-331 / PSU-1)).